The primary structure comprises 115 residues: U31-theraphotoxin-Cg1a (115 aa).

Residues 1 to 18 (MKLCVIIIASLMVASVSG) form the signal peptide. The propeptide occupies 19 to 51 (RLRKIKGTELDKKMLLEKLGHGMDIRFEETPRA). Intrachain disulfides connect Cys-52-Cys-67, Cys-60-Cys-73, Cys-64-Cys-113, and Cys-66-Cys-86.

This sequence belongs to the neurotoxin 03 (Tx2) family. 02 subfamily. In terms of tissue distribution, expressed by the venom gland.

It localises to the secreted. Functionally, probable ion channel inhibitor. This is U31-theraphotoxin-Cg1a from Chilobrachys guangxiensis (Chinese earth tiger tarantula).